Consider the following 189-residue polypeptide: Endoribonuclease YbeY (189 aa).

Residues histidine 146, histidine 150, and histidine 156 each coordinate Zn(2+).

This sequence belongs to the endoribonuclease YbeY family. Zn(2+) serves as cofactor.

It localises to the cytoplasm. Functionally, single strand-specific metallo-endoribonuclease involved in late-stage 70S ribosome quality control and in maturation of the 3' terminus of the 16S rRNA. This Prochlorococcus marinus (strain MIT 9211) protein is Endoribonuclease YbeY.